We begin with the raw amino-acid sequence, 390 residues long: 3,5-dihydroxyphenylacetyl-CoA synthase (390 aa).

C173 is a catalytic residue.

The protein belongs to the thiolase-like superfamily. Chalcone/stilbene synthases family.

It carries out the reaction 4 malonyl-CoA + 4 H(+) = (3,5-dihydroxyphenyl)acetyl-CoA + 4 CO2 + 3 CoA + H2O. Its pathway is antibiotic biosynthesis; vancomycin biosynthesis. Its function is as follows. Involved in the biosynthesis of the nonproteinogenic amino acid monomer (S)-3,5-dihydroxyphenylglycine (Dpg) responsible of the production of vancomycin and teicoplanin antibiotics. Catalyzes the Claisen condensation of four molecules of malonyl-CoA to yield 3,5-dihydroxyphenylacetyl-CoA (DPA-CoA) and three free coenzyme A (CoA). DpgA requires the presence of the dehydratases DpgB and DpgD to facilitate the aromatization of the DPA-S-DgpA or DPA-S-CoA intermediate. The protein is 3,5-dihydroxyphenylacetyl-CoA synthase of Streptomyces toyocaensis.